The sequence spans 375 residues: STAGKVIKCKAAIAWELNKPLSIEQIEVAPPKAHEVRIKILATGVCRSDEHVISGAFRMPLPMVLGHEAAGVVESVGEGVTCVKPGDKVIPLFAPQCGKCRACQSPKGNLCTSNDLNSGSGLMPDGTSRFTCKGKSIHHFISTSTFTEYTVVHENSVVKIDPSAPLEKVCLIGCGFSTGYGAAMQTAKVEPGSICAVFGLGGVGLSVVMGCKAAGASRIIGVDINKDKFAKAKEMGATECINPLDFKKPINEVLFDLTGGEGVDYSFEVIGRTETMISAFTSCHQNLGTSVVVGVPPNASMITYNPLMLFTGRTWKGCVFGGWKSKDSVPKLVSDFMQKKFVLDPLITHTLPFEKINEGFDLLRSGKSIRTVLIF.

An N-acetylserine modification is found at S1. Zn(2+) is bound by residues C46, H67, C97, C100, C103, C111, and C174. NAD(+)-binding positions include 199–204, D223, K228, 293–295, and R370; these read GLGGVG and VGV.

The protein belongs to the zinc-containing alcohol dehydrogenase family. Class-I subfamily. As to quaternary structure, homodimer. It depends on Zn(2+) as a cofactor.

Its subcellular location is the cytoplasm. The catalysed reaction is a primary alcohol + NAD(+) = an aldehyde + NADH + H(+). The enzyme catalyses a secondary alcohol + NAD(+) = a ketone + NADH + H(+). This Naja naja (Indian cobra) protein is Alcohol dehydrogenase 1.